The primary structure comprises 769 residues: Dolichyl-phosphate-mannose--protein mannosyltransferase 2 (769 aa).

Positions 1–44 are disordered; that stretch reads MSTSVEPNETEALLRKQNDLSTTASIEEKYPHQQGEAAEDDDDT. N-linked (GlcNAc...) asparagine glycosylation is present at Asn8. Residues 59 to 79 form a helical membrane-spanning segment; that stretch reads SLKQVESILAPIVFTALSFFV. An N-linked (GlcNAc...) asparagine glycan is attached at Asn132. The next 3 helical transmembrane spans lie at 152–169, 176–194, and 200–218; these read MRLF…LAYF, FSMF…ESSY, and FILL…VFCF. N-linked (GlcNAc...) asparagine glycosylation is present at Asn226. The next 2 membrane-spanning stretches (helical) occupy residues 252–272 and 288–308; these read VKMV…VDLW and HWFA…MLSF. A glycan (N-linked (GlcNAc...) asparagine) is linked at Asn324. The MIR 1 domain occupies 342–397; sequence PREVSMFHSVITLKNQGLSGGLLHSHVQTFPEGSKQQQVTTYGHKDSNNNWIFQRA. N-linked (GlcNAc...) asparagine glycosylation is found at Asn408, Asn453, and Asn462. MIR domains lie at 412–468 and 474–534; these read IEYI…VEIM and EDKM…IENN. 4 helical membrane-spanning segments follow: residues 615–635, 655–675, 679–699, and 718–738; these read TTWT…YYLI, FLMG…PFAI, VTYV…FCYE, and LLYL…FWYF.

It belongs to the glycosyltransferase 39 family. In terms of assembly, PMT1 and PMT2 form a functional heterodimer.

It localises to the endoplasmic reticulum membrane. The enzyme catalyses a di-trans,poly-cis-dolichyl beta-D-mannosyl phosphate + L-seryl-[protein] = 3-O-(alpha-D-mannosyl)-L-seryl-[protein] + a di-trans,poly-cis-dolichyl phosphate + H(+). The catalysed reaction is a di-trans,poly-cis-dolichyl beta-D-mannosyl phosphate + L-threonyl-[protein] = 3-O-(alpha-D-mannosyl)-L-threonyl-[protein] + a di-trans,poly-cis-dolichyl phosphate + H(+). It participates in protein modification; protein glycosylation. In terms of biological role, protein mannosyltransferase (PMT) involved in hyphal growth and drug sensitivity. Transfers mannose from Dol-P-mannose to Ser or Thr residues on proteins. PMT1, PMT2 and PMT4 account for most of the protein-O-glycosylation activity, while PMT5 and PMT6 may specifically modulate a much narrower spectrum of target proteins. Essential protein that plays an important role in virulence. In Candida albicans (strain SC5314 / ATCC MYA-2876) (Yeast), this protein is Dolichyl-phosphate-mannose--protein mannosyltransferase 2.